The following is a 396-amino-acid chain: NADH-quinone oxidoreductase subunit D (396 aa).

Belongs to the complex I 49 kDa subunit family. In terms of assembly, NDH-1 is composed of 14 different subunits. Subunits NuoB, C, D, E, F, and G constitute the peripheral sector of the complex.

The protein resides in the cell inner membrane. It catalyses the reaction a quinone + NADH + 5 H(+)(in) = a quinol + NAD(+) + 4 H(+)(out). Functionally, NDH-1 shuttles electrons from NADH, via FMN and iron-sulfur (Fe-S) centers, to quinones in the respiratory chain. The immediate electron acceptor for the enzyme in this species is believed to be ubiquinone. Couples the redox reaction to proton translocation (for every two electrons transferred, four hydrogen ions are translocated across the cytoplasmic membrane), and thus conserves the redox energy in a proton gradient. This Mesorhizobium japonicum (strain LMG 29417 / CECT 9101 / MAFF 303099) (Mesorhizobium loti (strain MAFF 303099)) protein is NADH-quinone oxidoreductase subunit D.